The following is a 189-amino-acid chain: dCTP deaminase, dUMP-forming (189 aa).

Residues 101–106 (KSSLGR), Asp119, 127–129 (TLE), Gln148, Tyr162, and Gln174 each bind dCTP. The active-site Proton donor/acceptor is the Glu129. Positions 163–189 (GSSEAGSKYQGQRGPTPSKAYLNFNRS) are disordered.

This sequence belongs to the dCTP deaminase family. In terms of assembly, homotrimer.

The enzyme catalyses dCTP + 2 H2O = dUMP + NH4(+) + diphosphate. It functions in the pathway pyrimidine metabolism; dUMP biosynthesis; dUMP from dCTP: step 1/1. Its function is as follows. Bifunctional enzyme that catalyzes both the deamination of dCTP to dUTP and the hydrolysis of dUTP to dUMP without releasing the toxic dUTP intermediate. The sequence is that of dCTP deaminase, dUMP-forming from Rhodococcus erythropolis (strain PR4 / NBRC 100887).